The chain runs to 348 residues: N6-Methyl-AMP deaminase (348 aa).

Residues His-18 and His-20 each contribute to the Zn(2+) site. N(6)-methyl-AMP is bound by residues His-20, Asn-22, His-68, 100 to 103 (STPR), Asp-142, and Gly-175. His-202 contributes to the Zn(2+) binding site. N(6)-methyl-AMP is bound by residues Glu-205, Asp-287, and Asp-288. The active-site Proton donor is Glu-205. Asp-287 lines the Zn(2+) pocket.

The protein belongs to the metallo-dependent hydrolases superfamily. Adenosine and AMP deaminases family. As to quaternary structure, monomer. It depends on Zn(2+) as a cofactor.

It catalyses the reaction N(6)-methyl-AMP + H2O + H(+) = IMP + methylamine. Its function is as follows. Catalyzes the hydrolysis of the free cytosolic methylated adenosine nucleotide N(6)-methyl-AMP (N6-mAMP) to produce inositol monophosphate (IMP) and methylamine. Is required for the catabolism of cytosolic N6-mAMP, which is derived from the degradation of mRNA containing N6-methylated adenine (m6A). This is N6-Methyl-AMP deaminase (mapda) from Danio rerio (Zebrafish).